Here is a 1463-residue protein sequence, read N- to C-terminus: Regulating synaptic membrane exocytosis protein 1 (1463 aa).

A disordered region spans residues 1–26; sequence MSSAVGPRGPRPPTVPPPMQELPDLS. The segment covering 9-20 has biased composition (pro residues); sequence GPRPPTVPPPMQ. The RabBD domain maps to 22–205; sequence LPDLSHLTEE…TKSGAWFFGS (184 aa). An FYVE-type zinc finger spans residues 133-193; that stretch reads KDDAPTCGIC…VCNLCRKQQE (61 aa). Zn(2+) is bound by residues C139, C142, C155, C158, C163, C166, C185, and C188. The segment at 205-393 is disordered; that stretch reads SGPQQPSQDG…DVELESESVS (189 aa). The span at 206–222 shows a compositional bias: polar residues; that stretch reads GPQQPSQDGTLSDTATG. Over residues 227-240 the composition is skewed to basic and acidic residues; the sequence is VPREKKARLQERSR. Residues 241–256 are compositionally biased toward polar residues; that stretch reads SQTPLSTAAVSSQDTA. A compositionally biased stretch (basic and acidic residues) spans 327-372; the sequence is ADERERKERRETRRLEKGRSQDYPDRLEKREDGRVAEDEKQRKEEE. Residues 381–391 show a composition bias toward acidic residues; the sequence is SCEDVELESES. Phosphoserine is present on S413. Residues 440–526 form the PDZ domain; the sequence is RTTMPKESGA…EPQVEIIVSR (87 aa). A disordered region spans residues 533–567; sequence RIPESSHPPLESSSSSFESQKMERPSISVISPTSP. Positions 535-551 are enriched in low complexity; it reads PESSHPPLESSSSSFES. Phosphoserine is present on residues S563 and S566. One can recognise a C2 1 domain in the interval 577-700; that stretch reads LPGQLSVKLW…ALLDDEPHWY (124 aa). Residues 705 to 856 are disordered; that stretch reads HDESSLPLPQ…YSSEPDSELL (152 aa). S716 bears the Phosphoserine mark. Over residues 770 to 779 the composition is skewed to polar residues; the sequence is ATTLTVPEQQ. Phosphoserine is present on S812. A compositionally biased stretch (basic and acidic residues) spans 827–844; sequence RHHDASRSLADHRSRHAE. S866 carries the post-translational modification Phosphoserine. The tract at residues 874–1049 is disordered; sequence SELQPSLDRA…RQLPQVPVRS (176 aa). Positions 928 to 941 are enriched in basic and acidic residues; it reads PENDRHSRKSERSS. Polar residues predominate over residues 1021-1035; that stretch reads QGSPTQSPPADTSFG. A Phosphoserine modification is found at S1023. At T1025 the chain carries Phosphothreonine. Residues S1027, S1079, S1081, S1082, S1110, S1111, and S1113 each carry the phosphoserine modification. The segment at 1104–1161 is disordered; sequence DNASAKSSDSDVSDVSAISRASSTSRLSSTSFMSEQSERPRGRISSFTPKMQGRRMGT. Residues 1116-1137 show a composition bias toward low complexity; that stretch reads SDVSAISRASSTSRLSSTSFMS. The residue at position 1187 (S1187) is a Phosphoserine. A disordered region spans residues 1216–1266; it reads RSRSTSQLSQTESGHKKLKSTIQRSTETGMAAEMRKMVRQPSRESTDGSIN. Over residues 1248-1261 the composition is skewed to basic and acidic residues; it reads EMRKMVRQPSREST. The C2 2 domain occupies 1309–1427; that stretch reads AMGDIQIGME…DLSSMVIGWY (119 aa). A phosphoserine mark is found at S1448, S1451, S1454, and S1463.

As to quaternary structure, binds SNAP25, SYT1 and CACNA1B. Interaction with SYT1 is enhanced by calcium ions. Interaction with SNAP25 is weaker in the presence of calcium ions. Interacts with TSPOAP1 and RIMBP2; interacts with PPFIA3 and PPFIA4. Interacts with ERC1. Interacts with RAB3A, RAB3B and RAB3D that have been activated by GTP-binding. Interacts with RAB3C, RAB10, RAB26 and RAB37. Binds UNC13A. Phosphorylated by BRSK1.

It is found in the cell membrane. The protein localises to the synapse. The protein resides in the presynaptic cell membrane. Rab effector involved in exocytosis. May act as scaffold protein that regulates neurotransmitter release at the active zone. Essential for maintaining normal probability of neurotransmitter release and for regulating release during short-term synaptic plasticity. Plays a role in dendrite formation by melanocytes. This is Regulating synaptic membrane exocytosis protein 1 (Rims1) from Mus musculus (Mouse).